A 1496-amino-acid chain; its full sequence is DENN domain-containing protein 4B (1496 aa).

The MABP domain occupies 44–203 (AEPITDVAVI…AVYLCYKVGL (160 aa)). Residues 195–369 (VYLCYKVGLA…NVPFPSPQRP (175 aa)) enclose the uDENN domain. Residues 390–526 (PLPLSGASFL…PYKVLLATLT (137 aa)) enclose the cDENN domain. The dDENN domain occupies 528–644 (LYQQLDQTYT…ECSFGSARHA (117 aa)). A disordered region spans residues 720 to 744 (QPGALPVPGPSRSAPSSPAPRRTKQ). Over residues 729 to 739 (PSRSAPSSPAP) the composition is skewed to low complexity. PPR repeat units lie at residues 775–811 (WFLC…VVLP) and 812–846 (DEVC…GIVP). 4 disordered regions span residues 891 to 970 (LRER…ARGA), 995 to 1055 (VPWH…TPRR), 1067 to 1119 (PSRH…GSEW), and 1205 to 1227 (SRPS…PVPG). Residues 896–912 (QQQQQQQQQQQQQQQEQ) show a composition bias toward low complexity. 2 stretches are compositionally biased toward polar residues: residues 913–924 (VSAHQEAGSSQA) and 935–944 (RPLQRQTTWA). Serine 953 carries the post-translational modification Phosphoserine. The span at 1075-1090 (RIPPPELPPDLPPPAR) shows a compositional bias: pro residues. Residue serine 1092 is modified to Phosphoserine. A compositionally biased stretch (low complexity) spans 1105-1119 (GSTASESSASLGSEW).

It is found in the golgi apparatus. Functionally, guanine nucleotide exchange factor (GEF) which may activate RAB10. Promotes the exchange of GDP to GTP, converting inactive GDP-bound Rab proteins into their active GTP-bound form. The chain is DENN domain-containing protein 4B (DENND4B) from Homo sapiens (Human).